Consider the following 244-residue polypeptide: 1-(5-phosphoribosyl)-5-[(5-phosphoribosylamino)methylideneamino] imidazole-4-carboxamide isomerase (244 aa).

Asp-7 acts as the Proton acceptor in catalysis. Residue Asp-129 is the Proton donor of the active site.

It belongs to the HisA/HisF family.

The protein resides in the cytoplasm. It catalyses the reaction 1-(5-phospho-beta-D-ribosyl)-5-[(5-phospho-beta-D-ribosylamino)methylideneamino]imidazole-4-carboxamide = 5-[(5-phospho-1-deoxy-D-ribulos-1-ylimino)methylamino]-1-(5-phospho-beta-D-ribosyl)imidazole-4-carboxamide. It participates in amino-acid biosynthesis; L-histidine biosynthesis; L-histidine from 5-phospho-alpha-D-ribose 1-diphosphate: step 4/9. In Pseudoalteromonas atlantica (strain T6c / ATCC BAA-1087), this protein is 1-(5-phosphoribosyl)-5-[(5-phosphoribosylamino)methylideneamino] imidazole-4-carboxamide isomerase.